The chain runs to 54 residues: Kazal-type inhibitor-like protein (54 aa).

In terms of domain architecture, Kazal-like spans 1–54; that stretch reads MKVNCKGYPTKFCFGKPLPHCASDGKTYPNRCRFCNAFVKSHGLITLRYYGKCK. Intrachain disulfides connect Cys-5-Cys-35, Cys-13-Cys-32, and Cys-21-Cys-53.

As to quaternary structure, may form disulfide-linked dimers or trimers (in vitro). Expressed by the venom gland.

Its subcellular location is the secreted. Its function is as follows. Partially inhibits trypsin in vitro at slightly acidic pH and concentrations in excess of 0.3 mM. Has no protease inhibitory activity at neutral or basic pH. Has no antibacterial activity. Shows no toxicity in vertebrates apart from transient paw edema in mouse. The protein is Kazal-type inhibitor-like protein of Bothriechis schlegelii (Eyelash palm pitviper).